Consider the following 530-residue polypeptide: MTSIYQEFIHTKCQSFRSIGRYVLHSIVLIYRFVSLHVHPFWIQLSYFLLISILGSVLLMFLKPSSPEFKPGYIDMLFLSTSAMTVSGLSTIEMEVLSSSQIVVLTLLMLVGGEVFVSFLGLMLRLKHKHNPEFSGDRVSSVPIELDTIEPTRTVMSSEELQIEAAAPDVPSSTIKDLKRSKRLRWFLGFVVFSYFVVIHVVGFLLVLWYISRVSSAKAPLKKKGINIALFSFSVTVSSFANGGLVPTNENMAIFSKNPGLLLLFIGQILAGNTLYPLFLRILIWFLGKVTKLKDLKLMIKNSDELQYDYLLPKLPTAFLASTVIGLMASLVTLFGSVDWNSSVFDGLSSYQKIINALFMAVNARHSGENSIDCSLIAPAVLVLFIILMYLPPSTTFALSNGDEKTANKKAKRKLGLVVRNLAFSQLACNAVFVIVALITERSRLRNDPLNFSALNMIFEVISAYGNVGLTTGYSCSRLQKLHPGSICQDKPYSLSGWWSDEGKLLLVSVMLYGRLKAFTKGTGEYWRLW.

The Cytoplasmic segment spans residues 1–40 (MTSIYQEFIHTKCQSFRSIGRYVLHSIVLIYRFVSLHVHP). Transmembrane regions (helical) follow at residues 41-61 (FWIQLSYFLLISILGSVLLMF) and 102-122 (IVVLTLLMLVGGEVFVSFLGL). The Cytoplasmic segment spans residues 123-186 (MLRLKHKHNP…DLKRSKRLRW (64 aa)). 2 helical membrane passes run 187 to 207 (FLGFVVFSYFVVIHVVGFLLV) and 260 to 280 (GLLLLFIGQILAGNTLYPLFL). Over 281-317 (RILIWFLGKVTKLKDLKLMIKNSDELQYDYLLPKLPT) the chain is Cytoplasmic. Helical transmembrane passes span 318-338 (AFLASTVIGLMASLVTLFGSV) and 372-392 (IDCSLIAPAVLVLFIILMYLP). Residues 393–420 (PSTTFALSNGDEKTANKKAKRKLGLVVR) lie on the Cytoplasmic side of the membrane. Transmembrane regions (helical) follow at residues 421–441 (NLAFSQLACNAVFVIVALITE) and 494–514 (SLSGWWSDEGKLLLVSVMLYG). Topologically, residues 515–530 (RLKAFTKGTGEYWRLW) are cytoplasmic.

The protein belongs to the TrkH potassium transport family. HKT (TC 2.A.38.3) subfamily.

It localises to the membrane. Seems to be involved in regulation of potassium-sodium homeostasis. Seems to act as a potassium-sodium cotransporter, which mediates increased potassium uptake under external sodium accumulation and contributes to salt-tolerance in cultivar indica Pokkali. This Oryza sativa subsp. indica (Rice) protein is Cation transporter HKT2;2.